The chain runs to 184 residues: Large ribosomal subunit protein bL9 (184 aa).

A disordered region spans residues 160–184 (LQNQKSEQQEAEQDANKEAADGDDS). A compositionally biased stretch (basic and acidic residues) spans 173–184 (DANKEAADGDDS).

The protein belongs to the bacterial ribosomal protein bL9 family.

In terms of biological role, binds to the 23S rRNA. The polypeptide is Large ribosomal subunit protein bL9 (Wolbachia sp. subsp. Drosophila simulans (strain wRi)).